The following is a 278-amino-acid chain: 4-deoxy-L-threo-5-hexosulose-uronate ketol-isomerase (278 aa).

Zn(2+) contacts are provided by histidine 196, histidine 198, glutamate 203, and histidine 245.

Belongs to the KduI family. Zn(2+) serves as cofactor.

The enzyme catalyses 5-dehydro-4-deoxy-D-glucuronate = 3-deoxy-D-glycero-2,5-hexodiulosonate. It functions in the pathway glycan metabolism; pectin degradation; 2-dehydro-3-deoxy-D-gluconate from pectin: step 4/5. Catalyzes the isomerization of 5-dehydro-4-deoxy-D-glucuronate to 3-deoxy-D-glycero-2,5-hexodiulosonate. This Pectobacterium carotovorum subsp. carotovorum (Erwinia carotovora subsp. carotovora) protein is 4-deoxy-L-threo-5-hexosulose-uronate ketol-isomerase.